Consider the following 312-residue polypeptide: Ribonuclease Z (312 aa).

The Zn(2+) site is built by His-63, His-65, Asp-67, His-68, His-141, Asp-212, and His-270. Asp-67 (proton acceptor) is an active-site residue.

It belongs to the RNase Z family. As to quaternary structure, homodimer. Requires Zn(2+) as cofactor.

The enzyme catalyses Endonucleolytic cleavage of RNA, removing extra 3' nucleotides from tRNA precursor, generating 3' termini of tRNAs. A 3'-hydroxy group is left at the tRNA terminus and a 5'-phosphoryl group is left at the trailer molecule.. Its function is as follows. Zinc phosphodiesterase, which displays some tRNA 3'-processing endonuclease activity. Probably involved in tRNA maturation, by removing a 3'-trailer from precursor tRNA. This chain is Ribonuclease Z, found in Latilactobacillus sakei subsp. sakei (strain 23K) (Lactobacillus sakei subsp. sakei).